Reading from the N-terminus, the 2293-residue chain is MENIRKLEAQRRKEYLRAETEIRNNNVFEKDILQKFLHIVGKKQRHYTISSKKKEVQDIFNKCSTNPGFTKDVIDLAERILYAPPNLNQIDFAMTIVSLIEMQRHDDLIHKLNELLVRSGMKVISFEFKLCDHFPFTNSILTPDILFEDPYGSRYILEVKVRNKHTDLEHYYMRYKKVVGVHAKVGVFNLSQSGYMQHGDYKLSEKINLESDDFDDILLCVELAGKIREKYIQYPQYFLYTLQSEVTNPDSFLDGFKTRLSDLSMFEEIKSGFGDYWNDITYHMDNYSLIDNHDEVTEDLLNSTDDLTQYCNDLYDEFLDHSQSYSRQGKYGKTILRNSGLDNIIDKKNRSKYTITSKLKPSVYIPITKTIKLDTYGGSRLKFYKDAFINIKCTGDSYSRSAYNLVDNVFNTSSIDLLMTKDDKIDPSLYYEVLDPGFIAHLHDDQVKYKKIAKVTNITSDMTILANNSFSIHCHTDQRLKDNICGYDKKHYDSTQKAKECLDFSNSSLLLPSLGVHLSAIFKSEHHAGVYWNDLVTLGTDNLNHMTSDIPEEAQTKFLEHLYNSHIIFKAIISLNTINSHKFRLLQSPDPGTIIILLPNSDGLKGAPLRYFVVSILQKQDNDSIEANKLLGIYHSHTESKKYKIMLSKVISLDITRLKLLSNSFVKYSLLISYYSQFKKSLKFDTHMLSWMLSQVTTIASLSITDVYKNFIMAIYSDYSNIDDLINDKLECRPRTLGHVFVMKHLFQGITSAVEQLGKINKNKLIADVNDEGELISTGFDPNLRLKLPISQLSTNNPKEIIHESFILFYLGNKGLHGSPQELLNLYYTPMQFESEYTKMMTDCGLYCQELGNNGNLSFSFQAMFLTSKVAYAKLLNNTDEIRRSLVKEMKMDEPIMSIKQFSSTKSMVSNSVPDMSIKDCNLNKNIDVIQLERYIDTSLISDPMKYITLMNNSIESINQERLLIYKDKLNKGIVLLPKLILTTFKGKSFIGLENHYYTKLVSGDYIKQTNTKVFDEFYRLTDEIQEEKLRGFYKGYITEGDLLVRIFNKDQRTTDDREIYTGNAQVRLCLYPLEMTFKSICKKIPEEAITISGDQKQRKLLEQRLALIKTKRQFNKSGYKTEIYSVSSDASKWSARDLLPKFIISIATNPYLTSDEKYFLVYLLVRYYDKKIVLTDSAFSNALRFSREDINGKYEEMTNNFTQNWFNVRSNWLQGNLNMTSSFVHHCSTIMTDTLLSISAKHNGFEAVMTSMVHSDDSTYDFLIAKNSKTSSYINNEANMGRFIISLITYSNKKHCITLNEKKTYISTFYKEFLSTTIVSNELFFFYMADLMPISSDTSYKSPLEDLASYTGYINNSFSHACPIQILKCAITLLNHLTLSTYNMQYTSEKNPRCNIPNSTDLPIQIYPRYKLPLSLAGCIPYYSSDAYNILDDIIKTLEKNKVIKNSLLEDVIDDETLDEYITLVNKQKPEYAKYIQACLLTMDYTQYERDDEDPYNIVDYDLSQKSIINVASINKGSRIKKTYTYKKYLENETDIRLTSCVNPMWCISKPKDEVLIKNPILANYMNPNFKDSLIFSKSALDYGRRIIGSNKSMDTLSSHAFEKEKKQGIKTIYKKLDDKISTVEISKQSLQRFLECIYSVIKKSLVALQVYYSKVQVLVKTRPEFTKVIMPRSVYAEEYGKNSNTSMVENLLVEQYCEIEQVDSKVEKFISFCKHVLQRCGDIKIYRDPEDIDDDFRKYIEFKYTLKDATMGLIQPHQHLAEYAFDVYNNKLIFQGLMVRYYIDICETISNPSYNIPSYTSPNSIIMTLDSLMKRDEISSKIYISHIRTNRFDEYWLSRFGMYVYENYFVKYKLGYRIKIAANEKLMPTMKKVRNLREPFKFICSLVANDPSLFIQMTESPDFQISGWKYSDIIAEMKSTTDFSYNLFLYMMNEINFQTLMRVMNLNRRVWNHWLMKTDSEPSDPNASIALYMYQSTVVKVQTKTIGGGVTFSMLLLRHGMQHRQAFDEISKKIASDYAPQLRIANITPQTSFGRLQFCVNEYGRTVKPGSYRSSCICNVNIAALTDLKPDIAYKENTINQIVTIISPTFEGEFVFKLNTYCDSEYYTCVMLENLDLNRVMILDHLCRGKYLIENPEYFTEISDQITPGACLALFSNNVNNKLWSNTIDTSKFAKLVHIGNYLKTEHEASIVTKLCDSLVAICALNGIDHTLSLKPDNFIKSLRQYKLSYGFHEEFYNNYKKNEREPYTELIMAIASTAGDPFQKVILAIITIFKAYTDLFISYKTDEVEF.

A RdRp catalytic domain is found at 1111–1297 (TKRQFNKSGY…LITYSNKKHC (187 aa)).

The enzyme catalyses RNA(n) + a ribonucleoside 5'-triphosphate = RNA(n+1) + diphosphate. In terms of biological role, RNA-dependent RNA polymerase which is responsible for replication and transcription of the viral RNA genome. The polypeptide is RNA-directed RNA polymerase L (RdRp) (Eriophyes pyri (pearleaf blister mite)).